Reading from the N-terminus, the 410-residue chain is Structure-specific endonuclease subunit SLX1 homolog (410 aa).

In terms of domain architecture, GIY-YIG spans 6 to 89; that stretch reads QLHYCYFLLS…NICKVTRDNI (84 aa).

It belongs to the SLX1 family. Forms a heterodimer with a member of the SLX4 family. It depends on a divalent metal cation as a cofactor.

The protein resides in the nucleus. Its function is as follows. Catalytic subunit of a heterodimeric structure-specific endonuclease that resolves DNA secondary structures generated during DNA repair and recombination. Has endonuclease activity towards branched DNA substrates, introducing single-strand cuts in duplex DNA close to junctions with ss-DNA. The polypeptide is Structure-specific endonuclease subunit SLX1 homolog (Cryptosporidium parvum (strain Iowa II)).